Consider the following 482-residue polypeptide: Keratin, type I cytoskeletal 39 (482 aa).

The interval Met1–Asn24 is disordered. A head region spans residues Met1–Glu91. The 312-residue stretch at Glu91–Leu402 folds into the IF rod domain. The segment at Lys92–Ala126 is coil 1A. Positions Cys127 to Asp137 are linker 1. Positions Tyr138–Cys238 are coil 1B. The interval Gln239 to Val254 is linker 12. Positions Asp255–Leu398 are coil 2. The tract at residues Asp399–Val482 is tail.

Belongs to the intermediate filament family. As to quaternary structure, heterotetramer of two type I and two type II keratins.

Functionally, may play a role in late hair differentiation. In Mus musculus (Mouse), this protein is Keratin, type I cytoskeletal 39 (Krt39).